The following is a 152-amino-acid chain: MGEKLICNNKKAYHDYFIEEKMEAGLVLLGTEVKSLRAGKANLNDSFMLVRDGEAFLHNLHISPYEFGNRQNHQADRNRKLLLHRKQIDRLYGRIREQGYSIVPLRMYFKDGLVKVEIGLAKGKKLYDKREDMKKKDSQRELSQALKSKNRE.

The span at 129 to 140 (KREDMKKKDSQR) shows a compositional bias: basic and acidic residues. The interval 129-152 (KREDMKKKDSQRELSQALKSKNRE) is disordered. Positions 141 to 152 (ELSQALKSKNRE) are enriched in polar residues.

Belongs to the SmpB family.

It localises to the cytoplasm. In terms of biological role, required for rescue of stalled ribosomes mediated by trans-translation. Binds to transfer-messenger RNA (tmRNA), required for stable association of tmRNA with ribosomes. tmRNA and SmpB together mimic tRNA shape, replacing the anticodon stem-loop with SmpB. tmRNA is encoded by the ssrA gene; the 2 termini fold to resemble tRNA(Ala) and it encodes a 'tag peptide', a short internal open reading frame. During trans-translation Ala-aminoacylated tmRNA acts like a tRNA, entering the A-site of stalled ribosomes, displacing the stalled mRNA. The ribosome then switches to translate the ORF on the tmRNA; the nascent peptide is terminated with the 'tag peptide' encoded by the tmRNA and targeted for degradation. The ribosome is freed to recommence translation, which seems to be the essential function of trans-translation. This Pelobacter propionicus (strain DSM 2379 / NBRC 103807 / OttBd1) protein is SsrA-binding protein.